Here is a 66-residue protein sequence, read N- to C-terminus: UPF0370 protein YpfN (66 aa).

The helical transmembrane segment at 4–24 (LAKYWWILVIVFLVGVLLNVI) threads the bilayer. Residues 39–66 (KPELPPHRDFNDKWDDDDDWPKKDQPKK) are disordered. Basic and acidic residues predominate over residues 42 to 51 (LPPHRDFNDK).

This sequence belongs to the UPF0370 family.

Its subcellular location is the cell membrane. The polypeptide is UPF0370 protein YpfN (Escherichia coli O139:H28 (strain E24377A / ETEC)).